Here is a 186-residue protein sequence, read N- to C-terminus: Threonylcarbamoyl-AMP synthase (186 aa).

The YrdC-like domain occupies 5–186 (TQSINDAVKC…DAITGEILRL (182 aa)).

It belongs to the SUA5 family. TsaC subfamily.

The protein localises to the cytoplasm. It catalyses the reaction L-threonine + hydrogencarbonate + ATP = L-threonylcarbamoyladenylate + diphosphate + H2O. Its function is as follows. Required for the formation of a threonylcarbamoyl group on adenosine at position 37 (t(6)A37) in tRNAs that read codons beginning with adenine. Catalyzes the conversion of L-threonine, HCO(3)(-)/CO(2) and ATP to give threonylcarbamoyl-AMP (TC-AMP) as the acyladenylate intermediate, with the release of diphosphate. The chain is Threonylcarbamoyl-AMP synthase from Coxiella burnetii (strain RSA 493 / Nine Mile phase I).